Consider the following 54-residue polypeptide: UPF0391 membrane protein RC1_1636 (54 aa).

A run of 2 helical transmembrane segments spans residues Y3–I23 and I30–L50.

The protein belongs to the UPF0391 family.

The protein resides in the cell membrane. In Rhodospirillum centenum (strain ATCC 51521 / SW), this protein is UPF0391 membrane protein RC1_1636.